The chain runs to 178 residues: MSEHKGPTGAMVDPESLPYRPCVGLMVLNKAGLVWAGRRIVIPGDEMDGATQLWQMPQGGIDKGEDPAQAALRELYEETGMTSVSLLEEASDWINYDLPPHLVGLALKGKYRGQTQKWFAYRFEGDESEIAINPPPGGHTAEFDCWEWKPMADLPNLIVPFKRKVYEQVVATFRHLAA.

The region spanning 18–171 (PYRPCVGLMV…KRKVYEQVVA (154 aa)) is the Nudix hydrolase domain. The Nudix box motif lies at 59 to 80 (GGIDKGEDPAQAALRELYEETG).

Belongs to the Nudix hydrolase family. RppH subfamily. It depends on a divalent metal cation as a cofactor.

Accelerates the degradation of transcripts by removing pyrophosphate from the 5'-end of triphosphorylated RNA, leading to a more labile monophosphorylated state that can stimulate subsequent ribonuclease cleavage. In Brucella melitensis biotype 2 (strain ATCC 23457), this protein is RNA pyrophosphohydrolase.